The sequence spans 339 residues: UPF0450 protein C17orf58 (339 aa).

Residues 1 to 17 (MTARAFWLLCLIVGSSP) form the signal peptide. Residues 17–191 (PEAPVAERKT…PQRDAEPGAE (175 aa)) form a disordered region. Residues 21 to 36 (VAERKTSPPHSRKPDS) show a composition bias toward basic and acidic residues. Positions 56–72 (APQRPRAAEVAPAARAW) are enriched in low complexity. The span at 112–125 (ASPRREPASEDAPR) shows a compositional bias: basic and acidic residues. Residues 132 to 163 (LRFPAARPPALATEGSAGHAHPNRPRAAALAP) are compositionally biased toward low complexity. Cystine bridges form between Cys193/Cys267, Cys197/Cys271, and Cys208/Cys338. The NTR domain maps to 193–338 (CARACRSDLD…QIQGAIHTQC (146 aa)).

Belongs to the UPF0450 family.

The protein is UPF0450 protein C17orf58 (C17orf58) of Homo sapiens (Human).